Consider the following 673-residue polypeptide: Exoribonuclease 2 (673 aa).

Positions 191–516 constitute an RNB domain; sequence RTDLTATPFF…NHRLLKAVIA (326 aa). The S1 motif domain maps to 562–645; sequence DKVFNAEIID…ETRSLIAKPA (84 aa). The interval 650 to 673 is disordered; sequence PGPAPVAPTSEADATPADEAPKAE.

It belongs to the RNR ribonuclease family. RNase II subfamily.

It is found in the cytoplasm. The enzyme catalyses Exonucleolytic cleavage in the 3'- to 5'-direction to yield nucleoside 5'-phosphates.. Functionally, involved in mRNA degradation. Hydrolyzes single-stranded polyribonucleotides processively in the 3' to 5' direction. The sequence is that of Exoribonuclease 2 from Aeromonas hydrophila subsp. hydrophila (strain ATCC 7966 / DSM 30187 / BCRC 13018 / CCUG 14551 / JCM 1027 / KCTC 2358 / NCIMB 9240 / NCTC 8049).